The chain runs to 134 residues: Endoribonuclease YbeY (134 aa).

Zn(2+) is bound by residues histidine 94, histidine 98, and histidine 104.

The protein belongs to the endoribonuclease YbeY family. Requires Zn(2+) as cofactor.

It localises to the cytoplasm. Single strand-specific metallo-endoribonuclease involved in late-stage 70S ribosome quality control and in maturation of the 3' terminus of the 16S rRNA. The chain is Endoribonuclease YbeY from Campylobacter fetus subsp. fetus (strain 82-40).